Reading from the N-terminus, the 355-residue chain is 3-isopropylmalate dehydrogenase (355 aa).

Residues R90, R100, R128, and D222 each coordinate substrate. D222, D246, and D250 together coordinate Mg(2+). 280–292 (GSAPDIAGKGIAN) serves as a coordination point for NAD(+).

It belongs to the isocitrate and isopropylmalate dehydrogenases family. LeuB type 1 subfamily. As to quaternary structure, homodimer. Mg(2+) serves as cofactor. Requires Mn(2+) as cofactor.

The protein localises to the cytoplasm. It carries out the reaction (2R,3S)-3-isopropylmalate + NAD(+) = 4-methyl-2-oxopentanoate + CO2 + NADH. Its pathway is amino-acid biosynthesis; L-leucine biosynthesis; L-leucine from 3-methyl-2-oxobutanoate: step 3/4. Catalyzes the oxidation of 3-carboxy-2-hydroxy-4-methylpentanoate (3-isopropylmalate) to 3-carboxy-4-methyl-2-oxopentanoate. The product decarboxylates to 4-methyl-2 oxopentanoate. The sequence is that of 3-isopropylmalate dehydrogenase from Burkholderia mallei (strain ATCC 23344).